The chain runs to 526 residues: G-protein coupled receptor 161 (526 aa).

Topologically, residues 1–27 (MNGSKNGTAVANSTNGLDDNGLMVLES) are extracellular. Asn-2, Asn-6, and Asn-12 each carry an N-linked (GlcNAc...) asparagine glycan. Residues 28 to 48 (VSIIIIAILACLGNLVIVVTL) form a helical membrane-spanning segment. At 49 to 60 (YKKPYLLTPSNK) the chain is on the cytoplasmic side. A helical membrane pass occupies residues 61 to 81 (FVFSLTSSNLLLSVLMLPFVV). Residues 82–98 (ASSVRRDWMFGVVWCNF) are Extracellular-facing. Cys-96 and Cys-174 are oxidised to a cystine. A glycan (N-linked (GlcNAc...) asparagine) is linked at Asn-97. Residues 99–119 (TALLHLLVSSSSMLTLGAIAI) traverse the membrane as a helical segment. Residues 120 to 139 (DRYYAVLYPMIYPMKITGNR) are Cytoplasmic-facing. Residues 140–160 (AVLAIVYIWLHSLVGCLPPLF) traverse the membrane as a helical segment. At 161–186 (GWSSFEFDRFKWTCTVSWHKEISYTA) the chain is on the extracellular side. The chain crosses the membrane as a helical span at residues 187-207 (FWVTWCCLLPLVAMLVCYGVI). The Cytoplasmic portion of the chain corresponds to 208–263 (FRVARIKARKVYCGSVVVSQEESSSQNNGRKNSNTSTSSSGSRKSLIYSGSQCKAF). The tract at residues 231-250 (SSQNNGRKNSNTSTSSSGSR) is disordered. Residues 264-284 (ITILVVLGTFLTTWGPYVVVI) traverse the membrane as a helical segment. The Extracellular segment spans residues 285–300 (STEALLGKNSVSPQVE). A helical transmembrane segment spans residues 301-321 (TLVSWLSFTSAVCHPLIYGLW). Over 322 to 526 (NKTVRKELLG…EEEMEREEKM (205 aa)) the chain is Cytoplasmic. A disordered region spans residues 505 to 526 (IDEGIVKDDDDDEEEMEREEKM). Over residues 512-526 (DDDDDEEEMEREEKM) the composition is skewed to acidic residues.

Belongs to the G-protein coupled receptor 1 family.

Its subcellular location is the cell projection. The protein localises to the cilium membrane. The protein resides in the cell membrane. Functionally, key negative regulator of Shh signaling during neural tube development. Recruited to primary cilia and acts as a regulator of the PKA-dependent basal repression machinery in Shh signaling by increasing cAMP levels, leading to promote the PKA-dependent processing of gli3 into gli3r and repress the Shh signaling. In presence of shh, it is removed from primary cilia, preventing its activity and allowing activation of the Shh signaling. Required in left/right patterning by modulating Ca(2+) levels in the cells surrounding the Kupffer vesicle. This is G-protein coupled receptor 161 (gpr161) from Danio rerio (Zebrafish).